We begin with the raw amino-acid sequence, 151 residues long: Deoxyuridine 5'-triphosphate nucleotidohydrolase (151 aa).

Residues 70 to 72 (RSG), Asn-83, 87 to 89 (LID), and Met-97 each bind substrate.

It belongs to the dUTPase family. It depends on Mg(2+) as a cofactor.

It catalyses the reaction dUTP + H2O = dUMP + diphosphate + H(+). Its pathway is pyrimidine metabolism; dUMP biosynthesis; dUMP from dCTP (dUTP route): step 2/2. Functionally, this enzyme is involved in nucleotide metabolism: it produces dUMP, the immediate precursor of thymidine nucleotides and it decreases the intracellular concentration of dUTP so that uracil cannot be incorporated into DNA. The chain is Deoxyuridine 5'-triphosphate nucleotidohydrolase from Pseudomonas putida (strain ATCC 700007 / DSM 6899 / JCM 31910 / BCRC 17059 / LMG 24140 / F1).